The sequence spans 316 residues: 4-hydroxy-3-methylbut-2-enyl diphosphate reductase (316 aa).

Residue Cys-18 coordinates [4Fe-4S] cluster. (2E)-4-hydroxy-3-methylbut-2-enyl diphosphate is bound by residues His-47 and His-80. Residues His-47 and His-80 each coordinate dimethylallyl diphosphate. His-47 and His-80 together coordinate isopentenyl diphosphate. Cys-102 provides a ligand contact to [4Fe-4S] cluster. His-130 contributes to the (2E)-4-hydroxy-3-methylbut-2-enyl diphosphate binding site. Dimethylallyl diphosphate is bound at residue His-130. His-130 is a binding site for isopentenyl diphosphate. Catalysis depends on Glu-132, which acts as the Proton donor. Position 171 (Thr-171) interacts with (2E)-4-hydroxy-3-methylbut-2-enyl diphosphate. Cys-201 provides a ligand contact to [4Fe-4S] cluster. Residues Ser-229, Ser-230, Asn-231, and Ser-274 each contribute to the (2E)-4-hydroxy-3-methylbut-2-enyl diphosphate site. The dimethylallyl diphosphate site is built by Ser-229, Ser-230, Asn-231, and Ser-274. Residues Ser-229, Ser-230, Asn-231, and Ser-274 each coordinate isopentenyl diphosphate.

Belongs to the IspH family. Requires [4Fe-4S] cluster as cofactor.

It catalyses the reaction isopentenyl diphosphate + 2 oxidized [2Fe-2S]-[ferredoxin] + H2O = (2E)-4-hydroxy-3-methylbut-2-enyl diphosphate + 2 reduced [2Fe-2S]-[ferredoxin] + 2 H(+). The enzyme catalyses dimethylallyl diphosphate + 2 oxidized [2Fe-2S]-[ferredoxin] + H2O = (2E)-4-hydroxy-3-methylbut-2-enyl diphosphate + 2 reduced [2Fe-2S]-[ferredoxin] + 2 H(+). The protein operates within isoprenoid biosynthesis; dimethylallyl diphosphate biosynthesis; dimethylallyl diphosphate from (2E)-4-hydroxy-3-methylbutenyl diphosphate: step 1/1. Its pathway is isoprenoid biosynthesis; isopentenyl diphosphate biosynthesis via DXP pathway; isopentenyl diphosphate from 1-deoxy-D-xylulose 5-phosphate: step 6/6. Catalyzes the conversion of 1-hydroxy-2-methyl-2-(E)-butenyl 4-diphosphate (HMBPP) into a mixture of isopentenyl diphosphate (IPP) and dimethylallyl diphosphate (DMAPP). Acts in the terminal step of the DOXP/MEP pathway for isoprenoid precursor biosynthesis. The protein is 4-hydroxy-3-methylbut-2-enyl diphosphate reductase of Paracoccus denitrificans (strain Pd 1222).